Here is a 538-residue protein sequence, read N- to C-terminus: Syncytin-1 (538 aa).

Positions 1–20 (MALPYHIFLFTVLLPSFTLT) are cleaved as a signal peptide. The Extracellular segment spans residues 21–443 (APPPCRCMTS…NIGPWGLFSQ (423 aa)). The N-linked (GlcNAc...) asparagine glycan is linked to Asn-169. Positions 186–189 (CWMC) match the CXXC motif. 3 disulfide bridges follow: Cys-186-Cys-189, Cys-186-Cys-405, and Cys-397-Cys-404. N-linked (GlcNAc...) asparagine glycans are attached at residues Asn-208, Asn-214, Asn-234, Asn-242, Asn-245, and Asn-281. The segment at 320 to 340 (ILPFVMAAGVLGALGTGIGGI) is fusion peptide. Residues 380–396 (LQNRRALDLLTAERGGT) form an immunosuppression region. The CX6CC motif lies at 397–405 (CLFLGEECC). Asn-409 carries N-linked (GlcNAc...) asparagine glycosylation. The chain crosses the membrane as a helical span at residues 444 to 464 (WMPWILPFLGPLAAIILLLLF). Positions 465-484 (GPCIFNLLVNFVSSRIEAVK) are essential for the fusiogenic function. Topologically, residues 465–538 (GPCIFNLLVN…LLRPNSAGSS (74 aa)) are cytoplasmic. The interval 501–538 (PLDWPASPRSDVNDIKGTPPEEISTAQPLLRPNSAGSS) is disordered.

Belongs to the gamma type-C retroviral envelope protein family. HERV class-I W env subfamily. In terms of assembly, the mature envelope protein (Env) consists of a trimer of SU-TM heterodimers attached probably by a labile interchain disulfide bond. Interacts with the C-type lectin CD209/DC-SIGN. In terms of processing, specific enzymatic cleavages in vivo yield mature proteins. Envelope glycoproteins are synthesized as an inactive precursor that is heavily N-glycosylated and processed likely by furin in the Golgi to yield the mature SU and TM proteins. The cleavage site between SU and TM requires the minimal sequence [KR]-X-[KR]-R. The CXXC motif is highly conserved across a broad range of retroviral envelope proteins. It is thought to participate in the formation of a labile disulfide bond possibly with the CX6CC motif present in the transmembrane protein.

It localises to the cell membrane. It is found in the virion. This endogenous retroviral envelope protein has retained its original fusogenic properties and participates in trophoblast fusion and the formation of a syncytium during placenta morphogenesis. May recognize and induce fusion through binding of SLC1A4 and SLC1A5. Functionally, endogenous envelope proteins may have kept, lost or modified their original function during evolution. Retroviral envelope proteins mediate receptor recognition and membrane fusion during early infection. The surface protein (SU) mediates receptor recognition, while the transmembrane protein (TM) acts as a class I viral fusion protein. The protein may have at least 3 conformational states: pre-fusion native state, pre-hairpin intermediate state, and post-fusion hairpin state. During viral and target cell membrane fusion, the coiled coil regions (heptad repeats) assume a trimer-of-hairpins structure, positioning the fusion peptide in close proximity to the C-terminal region of the ectodomain. The formation of this structure appears to drive apposition and subsequent fusion of membranes. This Pongo pygmaeus (Bornean orangutan) protein is Syncytin-1 (ERVW-1).